The primary structure comprises 669 residues: DNA ligase (669 aa).

NAD(+) is bound by residues 33–37 (DVTYD), 82–83 (SL), and glutamate 115. The active-site N6-AMP-lysine intermediate is lysine 117. NAD(+)-binding residues include arginine 138, glutamate 172, lysine 286, and lysine 310. Zn(2+) contacts are provided by cysteine 401, cysteine 404, cysteine 417, and cysteine 422. One can recognise a BRCT domain in the interval 589 to 669 (VDSSFLFGKK…DIKNLVNLDD (81 aa)).

Belongs to the NAD-dependent DNA ligase family. LigA subfamily. The cofactor is Mg(2+). Mn(2+) is required as a cofactor.

It carries out the reaction NAD(+) + (deoxyribonucleotide)n-3'-hydroxyl + 5'-phospho-(deoxyribonucleotide)m = (deoxyribonucleotide)n+m + AMP + beta-nicotinamide D-nucleotide.. DNA ligase that catalyzes the formation of phosphodiester linkages between 5'-phosphoryl and 3'-hydroxyl groups in double-stranded DNA using NAD as a coenzyme and as the energy source for the reaction. It is essential for DNA replication and repair of damaged DNA. The sequence is that of DNA ligase from Borrelia duttonii (strain Ly).